The following is a 247-amino-acid chain: Aspartate/glutamate leucyltransferase (247 aa).

Belongs to the R-transferase family. Bpt subfamily.

It is found in the cytoplasm. The enzyme catalyses N-terminal L-glutamyl-[protein] + L-leucyl-tRNA(Leu) = N-terminal L-leucyl-L-glutamyl-[protein] + tRNA(Leu) + H(+). It carries out the reaction N-terminal L-aspartyl-[protein] + L-leucyl-tRNA(Leu) = N-terminal L-leucyl-L-aspartyl-[protein] + tRNA(Leu) + H(+). In terms of biological role, functions in the N-end rule pathway of protein degradation where it conjugates Leu from its aminoacyl-tRNA to the N-termini of proteins containing an N-terminal aspartate or glutamate. The sequence is that of Aspartate/glutamate leucyltransferase from Dechloromonas aromatica (strain RCB).